Reading from the N-terminus, the 268-residue chain is Eukaryotic translation initiation factor 3 subunit J (268 aa).

Disordered regions lie at residues M1–H117 and N219–V242. Acidic residues predominate over residues D26–V44. A coiled-coil region spans residues E40–E95. 2 stretches are compositionally biased toward basic and acidic residues: residues E45–A65 and Q72–E86. Over residues A87–E99 the composition is skewed to acidic residues. Basic and acidic residues-rich tracts occupy residues A100–H117 and E220–S232.

The protein belongs to the eIF-3 subunit J family. Component of the eukaryotic translation initiation factor 3 (eIF-3) complex.

The protein resides in the cytoplasm. In terms of biological role, component of the eukaryotic translation initiation factor 3 (eIF-3) complex, which is involved in protein synthesis of a specialized repertoire of mRNAs and, together with other initiation factors, stimulates binding of mRNA and methionyl-tRNAi to the 40S ribosome. The eIF-3 complex specifically targets and initiates translation of a subset of mRNAs involved in cell proliferation. The polypeptide is Eukaryotic translation initiation factor 3 subunit J (hcr1) (Aspergillus clavatus (strain ATCC 1007 / CBS 513.65 / DSM 816 / NCTC 3887 / NRRL 1 / QM 1276 / 107)).